The primary structure comprises 175 residues: Protein OPG036 (175 aa).

The protein belongs to the poxviridae OPG036 family.

It localises to the host nucleus. Functionally, plays a role in the inhibition of host innate immune response. Within the host nucleus, inhibits activation of interferon-beta promoter by inhibiting IRF3 activation. In Homo sapiens (Human), this protein is Protein OPG036 (OPG036).